The sequence spans 208 residues: Uracil phosphoribosyltransferase (208 aa).

Residues arginine 78, arginine 103, and 130-138 contribute to the 5-phospho-alpha-D-ribose 1-diphosphate site; that span reads DPMLATGGS. Uracil contacts are provided by residues isoleucine 193 and 198–200; that span reads GDA. A 5-phospho-alpha-D-ribose 1-diphosphate-binding site is contributed by aspartate 199.

Belongs to the UPRTase family. Mg(2+) is required as a cofactor.

The enzyme catalyses UMP + diphosphate = 5-phospho-alpha-D-ribose 1-diphosphate + uracil. It functions in the pathway pyrimidine metabolism; UMP biosynthesis via salvage pathway; UMP from uracil: step 1/1. Its activity is regulated as follows. Allosterically activated by GTP. Functionally, catalyzes the conversion of uracil and 5-phospho-alpha-D-ribose 1-diphosphate (PRPP) to UMP and diphosphate. This chain is Uracil phosphoribosyltransferase, found in Aeromonas salmonicida (strain A449).